Here is a 359-residue protein sequence, read N- to C-terminus: Peptide chain release factor 1 (359 aa).

Residue Q235 is modified to N5-methylglutamine. Residues 283 to 294 (SKADEERSESRK) show a composition bias toward basic and acidic residues. Positions 283–309 (SKADEERSESRKSQVGSGDRSERIRTY) are disordered.

This sequence belongs to the prokaryotic/mitochondrial release factor family. In terms of processing, methylated by PrmC. Methylation increases the termination efficiency of RF1.

It is found in the cytoplasm. Its function is as follows. Peptide chain release factor 1 directs the termination of translation in response to the peptide chain termination codons UAG and UAA. The protein is Peptide chain release factor 1 of Mesorhizobium japonicum (strain LMG 29417 / CECT 9101 / MAFF 303099) (Mesorhizobium loti (strain MAFF 303099)).